We begin with the raw amino-acid sequence, 268 residues long: Chymotrypsin-C (268 aa).

Positions 1 to 16 are cleaved as a signal peptide; the sequence is MLGITVLAAILACASS. Positions 17-29 are cleaved as a propeptide — activation peptide; the sequence is CGDPTFPPNLSAR. Cystine bridges form between Cys-17–Cys-141, Cys-59–Cys-75, Cys-155–Cys-222, Cys-186–Cys-202, and Cys-212–Cys-243. Residue Asn-25 is glycosylated (N-linked (GlcNAc...) asparagine). In terms of domain architecture, Peptidase S1 spans 30–267; the sequence is VVGGEDAVPN…YIDWIKEKIQ (238 aa). Catalysis depends on His-74, which acts as the Charge relay system. N-linked (GlcNAc...) asparagine glycosylation is found at Asn-79 and Asn-90. Asp-121 acts as the Charge relay system in catalysis. The N-linked (GlcNAc...) asparagine glycan is linked to Asn-182. The active-site Charge relay system is Ser-216.

Belongs to the peptidase S1 family. Elastase subfamily.

The catalysed reaction is Preferential cleavage: Leu-|-Xaa, Tyr-|-Xaa, Phe-|-Xaa, Met-|-Xaa, Trp-|-Xaa, Gln-|-Xaa, Asn-|-Xaa.. Its function is as follows. Regulates activation and degradation of trypsinogens and procarboxypeptidases by targeting specific cleavage sites within their zymogen precursors. Has chymotrypsin-type protease activity and hypocalcemic activity. Cleaves TRY4 and TRY5 and thereby inhibits their autoactivation. This Mus musculus (Mouse) protein is Chymotrypsin-C (Ctrc).